The following is a 100-amino-acid chain: MIREERLLKVLRAPHVSEKASMAMEKNNTIVLKVATDATKAEIKAAVKKLFEVEVDTVRTLVVKGKVKRHGQRIGRRSDWKKAYVTLKEGQNLDFIGGAE.

The protein belongs to the universal ribosomal protein uL23 family. Part of the 50S ribosomal subunit. Contacts protein L29, and trigger factor when it is bound to the ribosome.

One of the early assembly proteins it binds 23S rRNA. One of the proteins that surrounds the polypeptide exit tunnel on the outside of the ribosome. Forms the main docking site for trigger factor binding to the ribosome. The polypeptide is Large ribosomal subunit protein uL23 (Edwardsiella ictaluri (strain 93-146)).